Consider the following 236-residue polypeptide: UPF0257 lipoprotein YnfC (236 aa).

The signal sequence occupies residues 1–16 (MKKPLLLTLLCMILAG). The N-palmitoyl cysteine moiety is linked to residue C17. C17 is lipidated: S-diacylglycerol cysteine.

The protein belongs to the UPF0257 family.

The protein resides in the cell membrane. The sequence is that of UPF0257 lipoprotein YnfC from Salmonella schwarzengrund (strain CVM19633).